The following is a 337-amino-acid chain: 3-isopropylmalate dehydrogenase (337 aa).

Substrate contacts are provided by Arg88, Arg98, Arg122, and Asp212. Asp212, Asp236, and Asp240 together coordinate Mg(2+). 272–284 (GSAPDIAGKGIAD) is an NAD(+) binding site.

This sequence belongs to the isocitrate and isopropylmalate dehydrogenases family. LeuB type 2 subfamily. In terms of assembly, homodimer. The cofactor is Mg(2+). Mn(2+) is required as a cofactor.

The protein resides in the cytoplasm. It carries out the reaction (2R,3S)-3-isopropylmalate + NAD(+) = 4-methyl-2-oxopentanoate + CO2 + NADH. Its pathway is amino-acid biosynthesis; L-leucine biosynthesis; L-leucine from 3-methyl-2-oxobutanoate: step 3/4. Catalyzes the oxidation of 3-carboxy-2-hydroxy-4-methylpentanoate (3-isopropylmalate) to 3-carboxy-4-methyl-2-oxopentanoate. The product decarboxylates to 4-methyl-2 oxopentanoate. This is 3-isopropylmalate dehydrogenase from Rhodococcus erythropolis (strain PR4 / NBRC 100887).